Here is an 89-residue protein sequence, read N- to C-terminus: Exodeoxyribonuclease 7 small subunit (89 aa).

This sequence belongs to the XseB family. As to quaternary structure, heterooligomer composed of large and small subunits.

It is found in the cytoplasm. The catalysed reaction is Exonucleolytic cleavage in either 5'- to 3'- or 3'- to 5'-direction to yield nucleoside 5'-phosphates.. Its function is as follows. Bidirectionally degrades single-stranded DNA into large acid-insoluble oligonucleotides, which are then degraded further into small acid-soluble oligonucleotides. The sequence is that of Exodeoxyribonuclease 7 small subunit from Chlorobium phaeobacteroides (strain DSM 266 / SMG 266 / 2430).